Here is a 102-residue protein sequence, read N- to C-terminus: Small ribosomal subunit protein uS10 (102 aa).

This sequence belongs to the universal ribosomal protein uS10 family. In terms of assembly, part of the 30S ribosomal subunit.

In terms of biological role, involved in the binding of tRNA to the ribosomes. In Desulfitobacterium hafniense (strain DSM 10664 / DCB-2), this protein is Small ribosomal subunit protein uS10.